The following is an 89-amino-acid chain: Small ribosomal subunit protein uS15 (89 aa).

It belongs to the universal ribosomal protein uS15 family. As to quaternary structure, part of the 30S ribosomal subunit. Forms a bridge to the 50S subunit in the 70S ribosome, contacting the 23S rRNA.

In terms of biological role, one of the primary rRNA binding proteins, it binds directly to 16S rRNA where it helps nucleate assembly of the platform of the 30S subunit by binding and bridging several RNA helices of the 16S rRNA. Forms an intersubunit bridge (bridge B4) with the 23S rRNA of the 50S subunit in the ribosome. The protein is Small ribosomal subunit protein uS15 of Azorhizobium caulinodans (strain ATCC 43989 / DSM 5975 / JCM 20966 / LMG 6465 / NBRC 14845 / NCIMB 13405 / ORS 571).